The chain runs to 60 residues: Small ribosomal subunit protein uS10 (60 aa).

This sequence belongs to the universal ribosomal protein uS10 family.

The sequence is that of Small ribosomal subunit protein uS10 (RPS20) from Zea mays (Maize).